The primary structure comprises 660 residues: DNA ligase (660 aa).

NAD(+) contacts are provided by residues 33-37 (DFVYD), 82-83 (SL), and glutamate 110. The N6-AMP-lysine intermediate role is filled by lysine 112. NAD(+) is bound by residues arginine 133, glutamate 167, lysine 281, and lysine 305. The Zn(2+) site is built by cysteine 396, cysteine 399, cysteine 412, and cysteine 417. Residues 583–660 (DENKLLVGKK…SFEDIKSYLD (78 aa)) form the BRCT domain.

It belongs to the NAD-dependent DNA ligase family. LigA subfamily. It depends on Mg(2+) as a cofactor. Requires Mn(2+) as cofactor.

It catalyses the reaction NAD(+) + (deoxyribonucleotide)n-3'-hydroxyl + 5'-phospho-(deoxyribonucleotide)m = (deoxyribonucleotide)n+m + AMP + beta-nicotinamide D-nucleotide.. Functionally, DNA ligase that catalyzes the formation of phosphodiester linkages between 5'-phosphoryl and 3'-hydroxyl groups in double-stranded DNA using NAD as a coenzyme and as the energy source for the reaction. It is essential for DNA replication and repair of damaged DNA. This Borreliella afzelii (strain PKo) (Borrelia afzelii) protein is DNA ligase.